The sequence spans 359 residues: Histamine H2 receptor (359 aa).

The Extracellular segment spans residues 1–22 (MAPNGTASSFCLDSTACKITIT). N-linked (GlcNAc...) asparagine glycosylation is present at Asn4. A helical membrane pass occupies residues 23-44 (VVLAVLILITVAGNVVVCLAVG). The Cytoplasmic segment spans residues 45 to 57 (LNRRLRNLTNCFI). A helical transmembrane segment spans residues 58–81 (VSLAITDLLLGLLVLPFSAIYQLS). Residues 82–92 (CKWSFGKVFCN) lie on the Extracellular side of the membrane. Cysteines 91 and 174 form a disulfide. Residues 93–114 (IYTSLDVMLCTASILNLFMISL) traverse the membrane as a helical segment. At 115 to 134 (DRYCAVMDPLRYPVLVTPVR) the chain is on the cytoplasmic side. The helical transmembrane segment at 135 to 159 (VAISLVLIWVISITLSFLSIHLGWN) threads the bilayer. Residues 160–180 (SRNETSKGNHTTSKCKVQVNE) are Extracellular-facing. The chain crosses the membrane as a helical span at residues 181-204 (VYGLVDGLVTFYLPLLIMCITYYR). Over 205–234 (IFKVARDQAKRINHISSWKAATIREHKATV) the chain is Cytoplasmic. Residues 235–258 (TLAAVMGAFIICWFPYFTAFVYRG) traverse the membrane as a helical segment. At 259–267 (LRGDDAINE) the chain is on the extracellular side. Residues 268–289 (VLEAIVLWLGYANSALNPILYA) traverse the membrane as a helical segment. The Cytoplasmic portion of the chain corresponds to 290–359 (ALNRDFRTGY…VTAPQGATDR (70 aa)). Cys305 is lipidated: S-palmitoyl cysteine. Positions 316–340 (SLRSNASQLSRTQSREPRQQEEKPL) are disordered. The segment covering 317 to 327 (LRSNASQLSRT) has biased composition (polar residues). The segment covering 328-340 (QSREPRQQEEKPL) has biased composition (basic and acidic residues).

It belongs to the G-protein coupled receptor 1 family.

It localises to the cell membrane. Its function is as follows. The H2 subclass of histamine receptors mediates gastric acid secretion. Also appears to regulate gastrointestinal motility and intestinal secretion. Possible role in regulating cell growth and differentiation. The activity of this receptor is mediated by G proteins which activate adenylyl cyclase and, through a separate G protein-dependent mechanism, the phosphoinositide/protein kinase (PKC) signaling pathway. The protein is Histamine H2 receptor (HRH2) of Gorilla gorilla gorilla (Western lowland gorilla).